A 214-amino-acid polypeptide reads, in one-letter code: Orotate phosphoribosyltransferase (214 aa).

Lysine 26 contributes to the 5-phospho-alpha-D-ribose 1-diphosphate binding site. Phenylalanine 34–phenylalanine 35 is a binding site for orotate. 5-phospho-alpha-D-ribose 1-diphosphate is bound by residues tyrosine 72 to lysine 73, arginine 99, lysine 100, lysine 103, histidine 105, and aspartate 124 to alanine 132. Threonine 128 and arginine 156 together coordinate orotate.

This sequence belongs to the purine/pyrimidine phosphoribosyltransferase family. PyrE subfamily. As to quaternary structure, homodimer. Mg(2+) is required as a cofactor.

It catalyses the reaction orotidine 5'-phosphate + diphosphate = orotate + 5-phospho-alpha-D-ribose 1-diphosphate. It participates in pyrimidine metabolism; UMP biosynthesis via de novo pathway; UMP from orotate: step 1/2. Catalyzes the transfer of a ribosyl phosphate group from 5-phosphoribose 1-diphosphate to orotate, leading to the formation of orotidine monophosphate (OMP). The protein is Orotate phosphoribosyltransferase of Mannheimia succiniciproducens (strain KCTC 0769BP / MBEL55E).